Here is a 364-residue protein sequence, read N- to C-terminus: Ribosomal RNA large subunit methyltransferase M (364 aa).

S-adenosyl-L-methionine is bound by residues S194, C227 to G230, D246, D266, and D284. The active-site Proton acceptor is the K313.

Belongs to the class I-like SAM-binding methyltransferase superfamily. RNA methyltransferase RlmE family. RlmM subfamily. As to quaternary structure, monomer.

Its subcellular location is the cytoplasm. The catalysed reaction is cytidine(2498) in 23S rRNA + S-adenosyl-L-methionine = 2'-O-methylcytidine(2498) in 23S rRNA + S-adenosyl-L-homocysteine + H(+). Functionally, catalyzes the 2'-O-methylation at nucleotide C2498 in 23S rRNA. The sequence is that of Ribosomal RNA large subunit methyltransferase M from Actinobacillus succinogenes (strain ATCC 55618 / DSM 22257 / CCUG 43843 / 130Z).